A 318-amino-acid polypeptide reads, in one-letter code: MTDKVQTTLLFLAVGEFSVGILGNAFIGLVNCMDWIKKRKIASIDLILTSLAISRICLLCVILLDCFILVLYPDVYATGKEMRIIDFFWILTNHLSIWFATCLSIYYFFKIANFFHPLFLWMKWRIDRVISWILLGCMVLSVFISLPATENLNADFRFCVKAKRKTNLTWSCRVNKTQHASIKLLLNLATLLPFCVCLMSFFLLILSLRRHIRRMQLSATGCRDPSTEAHVRALKAVISFLLLFIAYYLSFLIATSSYFMPETELAVIFGESIALIYPSSHSFILILGNNKLRHASLKVIWKVMSILKGRKFQQHKQI.

The Extracellular segment spans residues 1–9 (MTDKVQTTL). The chain crosses the membrane as a helical span at residues 10 to 30 (LFLAVGEFSVGILGNAFIGLV). At 31 to 55 (NCMDWIKKRKIASIDLILTSLAISR) the chain is on the cytoplasmic side. A helical transmembrane segment spans residues 56–76 (ICLLCVILLDCFILVLYPDVY). Over 77–94 (ATGKEMRIIDFFWILTNH) the chain is Extracellular. A helical membrane pass occupies residues 95 to 115 (LSIWFATCLSIYYFFKIANFF). Residues 116-128 (HPLFLWMKWRIDR) lie on the Cytoplasmic side of the membrane. Residues 129–149 (VISWILLGCMVLSVFISLPAT) traverse the membrane as a helical segment. Residues 150-187 (ENLNADFRFCVKAKRKTNLTWSCRVNKTQHASIKLLLN) lie on the Extracellular side of the membrane. N-linked (GlcNAc...) asparagine glycosylation is found at asparagine 167 and asparagine 175. The helical transmembrane segment at 188–208 (LATLLPFCVCLMSFFLLILSL) threads the bilayer. Residues 209 to 235 (RRHIRRMQLSATGCRDPSTEAHVRALK) are Cytoplasmic-facing. The chain crosses the membrane as a helical span at residues 236-256 (AVISFLLLFIAYYLSFLIATS). Residues 257-266 (SYFMPETELA) lie on the Extracellular side of the membrane. The chain crosses the membrane as a helical span at residues 267 to 287 (VIFGESIALIYPSSHSFILIL). At 288 to 318 (GNNKLRHASLKVIWKVMSILKGRKFQQHKQI) the chain is on the cytoplasmic side.

Belongs to the G-protein coupled receptor T2R family.

The protein resides in the membrane. Gustducin-coupled receptor implicated in the perception of bitter compounds in the oral cavity and the gastrointestinal tract. Signals through PLCB2 and the calcium-regulated cation channel TRPM5. The sequence is that of Taste receptor type 2 member 7 (TAS2R7) from Pongo pygmaeus (Bornean orangutan).